The primary structure comprises 176 residues: ATP-dependent protease subunit HslV (176 aa).

The active site involves Thr-5. Na(+)-binding residues include Ala-161, Cys-164, and Thr-167.

It belongs to the peptidase T1B family. HslV subfamily. A double ring-shaped homohexamer of HslV is capped on each side by a ring-shaped HslU homohexamer. The assembly of the HslU/HslV complex is dependent on binding of ATP.

It localises to the cytoplasm. The catalysed reaction is ATP-dependent cleavage of peptide bonds with broad specificity.. Allosterically activated by HslU binding. In terms of biological role, protease subunit of a proteasome-like degradation complex believed to be a general protein degrading machinery. This is ATP-dependent protease subunit HslV from Caldicellulosiruptor bescii (strain ATCC BAA-1888 / DSM 6725 / KCTC 15123 / Z-1320) (Anaerocellum thermophilum).